A 117-amino-acid polypeptide reads, in one-letter code: Immunoglobulin kappa variable 1D-43 (117 aa).

The first 22 residues, 1–22 (MDMRVPAQRLGLLLLWFPGARC), serve as a signal peptide directing secretion. Residues 23–45 (AIRMTQSPFSLSASVGDRVTITC) form a framework-1 region. Residues 23–117 (AIRMTQSPFS…YYCQQYYSTP (95 aa)) enclose the Ig-like domain. The cysteines at positions 45 and 110 are disulfide-linked. The segment at 46–56 (WASQGISSYLA) is complementarity-determining-1. Positions 57–71 (WYQQKPAKAPKLFIY) are framework-2. Residues 72–78 (YASSLQS) are complementarity-determining-2. The framework-3 stretch occupies residues 79 to 110 (GVPSRFSGSGSGTDYTLTISSLQPEDFATYYC). Residues 111–117 (QQYYSTP) are complementarity-determining-3.

In terms of assembly, immunoglobulins are composed of two identical heavy chains and two identical light chains; disulfide-linked.

The protein localises to the secreted. The protein resides in the cell membrane. Functionally, v region of the variable domain of immunoglobulin light chains that participates in the antigen recognition. Immunoglobulins, also known as antibodies, are membrane-bound or secreted glycoproteins produced by B lymphocytes. In the recognition phase of humoral immunity, the membrane-bound immunoglobulins serve as receptors which, upon binding of a specific antigen, trigger the clonal expansion and differentiation of B lymphocytes into immunoglobulins-secreting plasma cells. Secreted immunoglobulins mediate the effector phase of humoral immunity, which results in the elimination of bound antigens. The antigen binding site is formed by the variable domain of one heavy chain, together with that of its associated light chain. Thus, each immunoglobulin has two antigen binding sites with remarkable affinity for a particular antigen. The variable domains are assembled by a process called V-(D)-J rearrangement and can then be subjected to somatic hypermutations which, after exposure to antigen and selection, allow affinity maturation for a particular antigen. This Homo sapiens (Human) protein is Immunoglobulin kappa variable 1D-43.